The primary structure comprises 438 residues: Probable glucose-6-phosphate isomerase (438 aa).

Glutamate 280 acts as the Proton donor in catalysis. Active-site residues include histidine 301 and lysine 410.

The protein belongs to the GPI family.

The protein resides in the cytoplasm. The catalysed reaction is alpha-D-glucose 6-phosphate = beta-D-fructose 6-phosphate. The protein operates within carbohydrate biosynthesis; gluconeogenesis. Its pathway is carbohydrate degradation; glycolysis; D-glyceraldehyde 3-phosphate and glycerone phosphate from D-glucose: step 2/4. Catalyzes the reversible isomerization of glucose-6-phosphate to fructose-6-phosphate. The sequence is that of Probable glucose-6-phosphate isomerase from Methanococcus maripaludis (strain DSM 14266 / JCM 13030 / NBRC 101832 / S2 / LL).